Reading from the N-terminus, the 722-residue chain is Polyribonucleotide nucleotidyltransferase (722 aa).

Residues D495 and D501 each contribute to the Mg(2+) site. The region spanning 562-621 (PRLLSFRIDPELIGTVIGPGGRTIKGITERTNTKIDIEDGGIVTIASHDGAAAEEAQRII) is the KH domain. The 69-residue stretch at 631 to 699 (GEIFPGSITR…NRGRINLTLR (69 aa)) folds into the S1 motif domain. Residues 700-722 (GVSQNGGMSNYPEPTPTPVAPLT) are disordered. A compositionally biased stretch (pro residues) spans 712-722 (EPTPTPVAPLT).

The protein belongs to the polyribonucleotide nucleotidyltransferase family. It depends on Mg(2+) as a cofactor.

The protein localises to the cytoplasm. It carries out the reaction RNA(n+1) + phosphate = RNA(n) + a ribonucleoside 5'-diphosphate. Involved in mRNA degradation. Catalyzes the phosphorolysis of single-stranded polyribonucleotides processively in the 3'- to 5'-direction. The chain is Polyribonucleotide nucleotidyltransferase from Prochlorococcus marinus (strain NATL1A).